The primary structure comprises 714 residues: Fimbrin-3 (714 aa).

Residues 7-55 enclose the EF-hand domain; sequence VIVSDPWLQSQLTQVELRSLNSKFVALKNQSGKVTLEDLPSVLVKVKSL. 4 Calponin-homology (CH) domains span residues 124–241, 269–372, 393–499, and 514–622; these read QSEK…KIQL, LPPE…HERN, CRDE…RTHM, and DMTD…YWSL. 2 actin-binding regions span residues 124–372 and 393–622; these read QSEK…HERN and CRDE…YWSL. Low complexity predominate over residues 628 to 662; that stretch reads SSESSSSSSDSSSTHSTTTTCTSTCTSTDASPAPS. A disordered region spans residues 628–694; it reads SSESSSSSSD…NEVSSLTIEE (67 aa). Residues 670–680 are compositionally biased toward polar residues; sequence SSLNGEVSSLT. Over residues 681–694 the composition is skewed to acidic residues; it reads IEEDNEVSSLTIEE.

In terms of assembly, interacts with F-actin.

It localises to the cytoplasm. It is found in the cytoskeleton. In terms of biological role, cross-links actin filaments (F-actin). Stabilizes and prevents F-actin depolymerization mediated by profilin. May regulate actin cytoarchitecture, cell cycle, cell division, cell elongation and cytoplasmic tractus. The chain is Fimbrin-3 from Arabidopsis thaliana (Mouse-ear cress).